The primary structure comprises 151 residues: Large ribosomal subunit protein eL19 (151 aa).

The segment at 62–93 (RLKERRKKRSLKSEGKKSGSRKGKKGARANSK) is disordered. Positions 79–88 (SGSRKGKKGA) are enriched in basic residues.

The protein belongs to the eukaryotic ribosomal protein eL19 family. In terms of assembly, part of the 50S ribosomal subunit.

Functionally, binds to the 23S rRNA. In Saccharolobus solfataricus (strain ATCC 35092 / DSM 1617 / JCM 11322 / P2) (Sulfolobus solfataricus), this protein is Large ribosomal subunit protein eL19.